The primary structure comprises 429 residues: Z-DNA-binding protein 1 (429 aa).

2 consecutive Z-binding domains span residues 8-70 (PGRE…CLGG) and 103-166 (PQFS…TIYR). The tract at residues 68 to 107 (LGGTDPEGEGPAELALSSPAERPQQHAATIPETPGPQFSQ) is disordered. Short sequence motifs (RIP homotypic interaction motif (RHIM)) lie at residues 195-219 (NSWISIANSEAIQIGHGNIITRQTV) and 253-277 (DIHMEQSILRRVQLGHSNEMRLHGV). Disordered stretches follow at residues 277-299 (VPSEGPAHIPPGSPPVSATAAGP) and 339-429 (KMSI…GGGI). The span at 347–358 (AGPGGVAGSGEG) shows a compositional bias: gly residues. Over residues 407–420 (KAAEGSHYVDEASH) the composition is skewed to basic and acidic residues.

Homodimer. Interacts (via RIP homotypic interaction motif) with RIPK3; leading to RIPK3 activation and necroptosis; interaction is enhanced by CASP6. Interacts (via RIP homotypic interaction motif) with RIPK1. Component of the AIM2 PANoptosome complex, a multiprotein complex that drives inflammatory cell death (PANoptosis). As to quaternary structure, (Microbial infection) Interacts (via RIP homotypic interaction motif/RHIM) with herpes simplex virus 1/HHV-1 protein RIR1/ICP6 (via RHIM); this interaction may induce heteromeric amyloid assemblies and prevent necroptosis activation. Interacts with human herpes simplex virus 1/HHV-1 protein ICP0. Post-translationally, phosphorylated. As to expression, highly expressed in lymphatic tissues including lymph node, leukocytes, tonsil, bone marrow and spleen. Expressed to a lesser extent in thymus, lung and liver.

Its subcellular location is the cytoplasm. The protein resides in the nucleus. ZBP1-dependent necroptosis is normally inhibited by RIPK1: RIPK1 inhibits the ZBP1-induced activation of RIPK3 via FADD-mediated recruitment of CASP8, which cleaves RIPK1 and limits TNF-induced necroptosis. Key innate sensor that recognizes and binds Z-RNA structures, which are produced by a number of viruses, such as herpesvirus, orthomyxovirus or flavivirus, and triggers different forms of cell death. ZBP1 acts as an essential mediator of pyroptosis, necroptosis and apoptosis (PANoptosis), an integral part of host defense against pathogens, by activating RIPK3, caspase-8 (CASP8), and the NLRP3 inflammasome. Key activator of necroptosis, a programmed cell death process in response to death-inducing TNF-alpha family members, via its ability to bind Z-RNA: once activated upon Z-RNA-binding, ZBP1 interacts and stimulates RIPK3 kinase, which phosphorylates and activates MLKL, triggering execution of programmed necrosis. In addition to TNF-induced necroptosis, necroptosis can also take place in the nucleus in response to orthomyxoviruses infection: ZBP1 recognizes and binds Z-RNA structures that are produced in infected nuclei by orthomyxoviruses, such as the influenza A virus (IAV), leading to ZBP1 activation, RIPK3 stimulation and subsequent MLKL phosphorylation, triggering disruption of the nuclear envelope and leakage of cellular DNA into the cytosol. ZBP1-dependent cell death in response to IAV infection promotes interleukin-1 alpha (IL1A) induction in an NLRP3-inflammasome-independent manner: IL1A expression is required for the optimal interleukin-1 beta (IL1B) production, and together, these cytokines promote infiltration of inflammatory neutrophils to the lung, leading to the formation of neutrophil extracellular traps. In addition to its direct role in driving necroptosis via its ability to sense Z-RNAs, also involved in PANoptosis triggered in response to bacterial infection: component of the AIM2 PANoptosome complex, a multiprotein complex that triggers PANoptosis. Also acts as the apical sensor of fungal infection responsible for activating PANoptosis. Involved in CASP8-mediated cell death via its interaction with RIPK1 but independently of its ability to sense Z-RNAs. In some cell types, also able to restrict viral replication by promoting cell death-independent responses. In response to Zika virus infection in neurons, promotes a cell death-independent pathway that restricts viral replication: together with RIPK3, promotes a death-independent transcriptional program that modifies the cellular metabolism via up-regulation expression of the enzyme ACOD1/IRG1 and production of the metabolite itaconate. Itaconate inhibits the activity of succinate dehydrogenase, generating a metabolic state in neurons that suppresses replication of viral genomes. Functionally, (Microbial infection) In case of herpes simplex virus 1/HHV-1 infection, forms hetero-amyloid structures with HHV-1 protein RIR1/ICP6 which may inhibit ZBP1-mediated necroptosis, thereby preventing host cell death pathway and allowing viral evasion. This chain is Z-DNA-binding protein 1, found in Homo sapiens (Human).